The following is a 515-amino-acid chain: MSFVVAAPEVVVAAASDLAGIGSAIGAANAAAAVPTMGVLAAGADEVSAAVADLFGAHAQAYQALSAQAALFHEQFVHAMTAGAGAYAGAEAADAAALDVLNGPFQALFGRPLIGDGANGAPGQPGGPGGLLYGNGGNGGNGGIGQPGGAGGDAGLIGNGGNGGIGGPGATGLAGGAGGVGGLLFGDGGNGGAGGLGTGPVGATGGIGGPGGAAVGLFGHGGAGGAGGLGKAGFAGGAGGTGGTGGLLYGNGGNGGNVPSGAADGGAGGDARLIGNGGDGGSVGAAPTGIGNGGNGGNGGWLYGDGGSGGSTLQGFSDGGTGGNAGMFGDGGNGGFSFFDGNGGDGGTGGTLIGNGGDGGNSVQTDGFLRGHGGDGGNAVGLIGNGGAGGAGSAGTGVFAPGGGSGGNGGNGALLVGNGGAGGSGGPTQIPSVAVPVTGAGGTGGNGGTAGLIGNGGNGGAAGVSGDGTPGTGGNGGYAQLIGDGGDGGPGDSGGPGGSGGTGGTLAGQNGSPGG.

3 helical membrane passes run 1-21 (MSFV…LAGI), 165-185 (IGGP…GLLF), and 199-219 (GPVG…GLFG). Residues 1-93 (MSFVVAAPEV…AGAYAGAEAA (93 aa)) enclose the PE domain. Gly residues predominate over residues 349–360 (GGTLIGNGGDGG). Disordered regions lie at residues 349–368 (GGTL…TDGF) and 463–515 (GVSG…SPGG).

It belongs to the mycobacterial PE family. PGRS subfamily.

It localises to the cell membrane. This is an uncharacterized protein from Mycobacterium tuberculosis (strain CDC 1551 / Oshkosh).